Reading from the N-terminus, the 556-residue chain is MPKFDVAKSDLERLVGREFSVEEWEDLVLYAKCELDDVWEEDGKIYFKLDSKDTNRPDLWSAEGVARQIRWALGLAKGLPKYEVEESDVVVYVDKKLRNIRPYGVYAVVEGLKLDEEALSQLIQLQEKVALTYGRRRREVAIGIFDFDKVKPPIYYRAAEKTEKFVPLGYSEEMTLEEILEKHEKGREYGHLIRDKPYYPLLVDSEGNVLSMPPIINSELTGRVTTETKNVFVDVTGWDLRKVMLALNVIVTALAERGGKIKRVKVIYPDFEITTPDLTPKEFEVSFEYIRKLSGLELSNEEIKELLERMMYEVEILSENKAKVKYPAFRDDIMHTRDVLEDVLIAYGYNNIDPEEPKLAVQGRGDPFKDFEDAIRDLMVGFGLQEVMTFNLTSKEVQFDKMNIPEEEIVEIANPISSRWSALRKWLLPSLMEFLSNNTHEEYPQRIFEVGLATLIDESRETKTVSEPKLAVALAGSGYTFTNAKEILDSLMRHLGIEYDIEETVHGSFIPGRVGKILVDGKEIGIIGEIHPQVLENWNIQVPVVAFEIFLKPLYR.

The 77-residue stretch at 278 to 354 (LTPKEFEVSF…IAYGYNNIDP (77 aa)) folds into the B5 domain. Residues Asp332, Asp338, Glu341, and Asp342 each contribute to the Mg(2+) site.

The protein belongs to the phenylalanyl-tRNA synthetase beta subunit family. Type 2 subfamily. In terms of assembly, tetramer of two alpha and two beta subunits. Mg(2+) is required as a cofactor.

Its subcellular location is the cytoplasm. It carries out the reaction tRNA(Phe) + L-phenylalanine + ATP = L-phenylalanyl-tRNA(Phe) + AMP + diphosphate + H(+). This Pyrococcus furiosus (strain ATCC 43587 / DSM 3638 / JCM 8422 / Vc1) protein is Phenylalanine--tRNA ligase beta subunit.